Reading from the N-terminus, the 526-residue chain is GMP synthase [glutamine-hydrolyzing] (526 aa).

A Glutamine amidotransferase type-1 domain is found at 9 to 207 (RILILNFGSQ…VLDICSCQGR (199 aa)). C86 functions as the Nucleophile in the catalytic mechanism. Catalysis depends on residues H181 and E183. The 194-residue stretch at 208–401 (WTPNNIKENI…LGLPFHMLYR (194 aa)) folds into the GMPS ATP-PPase domain. Residue 235–241 (SGGVDST) coordinates ATP.

Homodimer.

The enzyme catalyses XMP + L-glutamine + ATP + H2O = GMP + L-glutamate + AMP + diphosphate + 2 H(+). The protein operates within purine metabolism; GMP biosynthesis; GMP from XMP (L-Gln route): step 1/1. In terms of biological role, catalyzes the synthesis of GMP from XMP. The sequence is that of GMP synthase [glutamine-hydrolyzing] from Baumannia cicadellinicola subsp. Homalodisca coagulata.